The sequence spans 184 residues: Probable maltose O-acetyltransferase (184 aa).

Residue Asn84 participates in acetyl-CoA binding. His114 (proton donor/acceptor) is an active-site residue. Acetyl-CoA is bound by residues Gly141, Ser159, Thr164–Lys165, Arg179, and Lys182.

Belongs to the transferase hexapeptide repeat family. As to quaternary structure, homodimer.

The catalysed reaction is D-maltose + acetyl-CoA = 1-O-acetylmaltose + CoA. Catalyzes the CoA-dependent transfer of an acetyl group to maltose and other sugars. Acetylates glucose exclusively at the C6 position and maltose at the C6 position of the non-reducing end glucosyl moiety. Is able to acetylate maltooligosaccharides. This is Probable maltose O-acetyltransferase (maa) from Bacillus subtilis (strain 168).